The primary structure comprises 428 residues: Septin homolog spn7 (428 aa).

The Septin-type G domain maps to 15–290 (KGKKLRIMVA…ENYRTEKLSN (276 aa)). Positions 25 to 32 (GSSYTSYQ) are G1 motif. GTP contacts are provided by residues 25 to 32 (GSSYTSYQ), glycine 86, 166 to 174 (NSNAFTEEE), and glycine 224. The tract at residues 83–86 (EVNG) is G3 motif. The segment at 165-168 (GNSN) is G4 motif. Disordered stretches follow at residues 287 to 345 (KLSN…SEEL) and 387 to 414 (KEFP…KKMD). Positions 290–307 (NDSPSNTSLSLQKQNSIV) are enriched in polar residues. Over residues 309 to 325 (NEDKRSVNGSERTETRS) the composition is skewed to basic and acidic residues. Composition is skewed to polar residues over residues 326-339 (SIDQ…VSDS) and 392-405 (RTTS…NNTT).

The protein belongs to the TRAFAC class TrmE-Era-EngA-EngB-Septin-like GTPase superfamily. Septin GTPase family. As to quaternary structure, component of the sporulation-specific septin complex composed of at least spn2, spn5, spn6 and spn7.

It localises to the cytoplasm. The protein localises to the nucleus. The protein resides in the forespore membrane. In terms of biological role, septin-like protein involved in the correct orientation of forespore membrane extension during sporulation. Binds phosphatidylinositol 4-phosphate. The polypeptide is Septin homolog spn7 (spn7) (Schizosaccharomyces pombe (strain 972 / ATCC 24843) (Fission yeast)).